The primary structure comprises 205 residues: GTP cyclohydrolase-2 (205 aa).

49–53 (RIHSE) lines the GTP pocket. 3 residues coordinate Zn(2+): cysteine 54, cysteine 65, and cysteine 67. GTP is bound by residues glutamine 70, 92–94 (EGR), and threonine 114. Residue aspartate 126 is the Proton acceptor of the active site. Arginine 128 serves as the catalytic Nucleophile. 2 residues coordinate GTP: threonine 149 and lysine 154.

It belongs to the GTP cyclohydrolase II family. It depends on Zn(2+) as a cofactor.

The catalysed reaction is GTP + 4 H2O = 2,5-diamino-6-hydroxy-4-(5-phosphoribosylamino)-pyrimidine + formate + 2 phosphate + 3 H(+). It functions in the pathway cofactor biosynthesis; riboflavin biosynthesis; 5-amino-6-(D-ribitylamino)uracil from GTP: step 1/4. Functionally, catalyzes the conversion of GTP to 2,5-diamino-6-ribosylamino-4(3H)-pyrimidinone 5'-phosphate (DARP), formate and pyrophosphate. In Shewanella denitrificans (strain OS217 / ATCC BAA-1090 / DSM 15013), this protein is GTP cyclohydrolase-2.